We begin with the raw amino-acid sequence, 573 residues long: ESX-1 secretion system protein EccA1 (573 aa).

334-341 (GPPGTGKT) provides a ligand contact to ATP.

It belongs to the CbxX/CfxQ family. As to quaternary structure, part of the ESX-1 / type VII secretion system (T7SS), which is composed of cytosolic and membrane components.

The protein resides in the cytoplasm. Functionally, part of the ESX-1 specialized secretion system, which delivers several virulence factors to host cells during infection, including the key virulence factors EsxA (ESAT-6) and EsxB (CFP-10). EccA1 exhibits ATPase activity and may provide energy for the export of ESX-1 substrates. This is ESX-1 secretion system protein EccA1 from Mycobacterium tuberculosis (strain CDC 1551 / Oshkosh).